Consider the following 514-residue polypeptide: 3-octaprenyl-4-hydroxybenzoate carboxy-lyase (514 aa).

Asn177 provides a ligand contact to Mn(2+). Prenylated FMN is bound by residues 180-182, 194-196, and 199-200; these read IYR, RWL, and RG. Position 243 (Glu243) interacts with Mn(2+). Asp314 serves as the catalytic Proton donor.

This sequence belongs to the UbiD family. In terms of assembly, homohexamer. Prenylated FMN is required as a cofactor. The cofactor is Mn(2+).

The protein resides in the cell membrane. It carries out the reaction a 4-hydroxy-3-(all-trans-polyprenyl)benzoate + H(+) = a 2-(all-trans-polyprenyl)phenol + CO2. It functions in the pathway cofactor biosynthesis; ubiquinone biosynthesis. In terms of biological role, catalyzes the decarboxylation of 3-octaprenyl-4-hydroxy benzoate to 2-octaprenylphenol, an intermediate step in ubiquinone biosynthesis. The polypeptide is 3-octaprenyl-4-hydroxybenzoate carboxy-lyase (Bordetella parapertussis (strain 12822 / ATCC BAA-587 / NCTC 13253)).